The chain runs to 218 residues: uncharacterized protein (218 aa).

Composition is skewed to polar residues over residues 1 to 21 and 68 to 102; these read MSSQ…SSEF and LNTS…SSDI. Disordered stretches follow at residues 1-39, 63-116, and 170-205; these read MSSQ…RHAS, EKRL…STSG, and GAKR…GTPQ. The span at 183–195 shows a compositional bias: basic and acidic residues; the sequence is KRQEKQSPLESRH.

This is an uncharacterized protein from Caenorhabditis elegans.